We begin with the raw amino-acid sequence, 340 residues long: Phosphoribosylformylglycinamidine cyclo-ligase (340 aa).

This sequence belongs to the AIR synthase family.

It is found in the cytoplasm. The catalysed reaction is 2-formamido-N(1)-(5-O-phospho-beta-D-ribosyl)acetamidine + ATP = 5-amino-1-(5-phospho-beta-D-ribosyl)imidazole + ADP + phosphate + H(+). Its pathway is purine metabolism; IMP biosynthesis via de novo pathway; 5-amino-1-(5-phospho-D-ribosyl)imidazole from N(2)-formyl-N(1)-(5-phospho-D-ribosyl)glycinamide: step 2/2. This chain is Phosphoribosylformylglycinamidine cyclo-ligase, found in Streptococcus pyogenes serotype M28 (strain MGAS6180).